Reading from the N-terminus, the 110-residue chain is Large ribosomal subunit protein uL22 (110 aa).

It belongs to the universal ribosomal protein uL22 family. Part of the 50S ribosomal subunit.

This protein binds specifically to 23S rRNA; its binding is stimulated by other ribosomal proteins, e.g. L4, L17, and L20. It is important during the early stages of 50S assembly. It makes multiple contacts with different domains of the 23S rRNA in the assembled 50S subunit and ribosome. Functionally, the globular domain of the protein is located near the polypeptide exit tunnel on the outside of the subunit, while an extended beta-hairpin is found that lines the wall of the exit tunnel in the center of the 70S ribosome. In Histophilus somni (strain 129Pt) (Haemophilus somnus), this protein is Large ribosomal subunit protein uL22.